We begin with the raw amino-acid sequence, 815 residues long: DNA gyrase subunit B (815 aa).

Residues 1–21 (MEKTPATGSAVAPPPVEYGTD) form a disordered region. A Toprim domain is found at 430-545 (SELYIVEGDS…AISTSRSRRS (116 aa)). Glu-436, Asp-509, and Asp-511 together coordinate Mg(2+).

Belongs to the type II topoisomerase GyrB family. In terms of assembly, heterotetramer, composed of two GyrA and two GyrB chains. In the heterotetramer, GyrA contains the active site tyrosine that forms a transient covalent intermediate with DNA, while GyrB binds cofactors and catalyzes ATP hydrolysis. The cofactor is Mg(2+). Requires Mn(2+) as cofactor. Ca(2+) is required as a cofactor.

The protein resides in the cytoplasm. The catalysed reaction is ATP-dependent breakage, passage and rejoining of double-stranded DNA.. In terms of biological role, a type II topoisomerase that negatively supercoils closed circular double-stranded (ds) DNA in an ATP-dependent manner to modulate DNA topology and maintain chromosomes in an underwound state. Negative supercoiling favors strand separation, and DNA replication, transcription, recombination and repair, all of which involve strand separation. Also able to catalyze the interconversion of other topological isomers of dsDNA rings, including catenanes and knotted rings. Type II topoisomerases break and join 2 DNA strands simultaneously in an ATP-dependent manner. The chain is DNA gyrase subunit B from Myxococcus xanthus.